The chain runs to 239 residues: Retrotransposon Gag-like protein 6 (239 aa).

A coiled-coil region spans residues 29–69 (LTSLRLTNSALRREASTLRAEKANLTNMLESVMAELTLLRT). Positions 82 to 94 (PISSITSNGTRPM) are enriched in polar residues. 2 disordered regions span residues 82–106 (PISS…EPFS) and 214–239 (TGPC…ARNL). A compositionally biased stretch (low complexity) spans 228 to 239 (PAPALPARARNL).

Belongs to the LDOC1 family.

The sequence is that of Retrotransposon Gag-like protein 6 from Homo sapiens (Human).